The chain runs to 319 residues: mRNA decay activator protein ZFP36 (319 aa).

The segment at 1-15 (MDLSAIYESLQSMSH) is necessary for nuclear export. Positions 1–92 (MDLSAIYESL…PTSPTATPTT (92 aa)) are necessary and sufficient for the association with mRNA decay enzymes and mRNA decay activation. Necessary for localization of ARE-containing mRNAs to processing bodies (PBs) regions lie at residues 1-166 (MDLS…DLAL) and 92-319 (TSSR…SVSE). Residue Ser52 is modified to Phosphoserine; by MAPKAPK2. The residue at position 58 (Ser58) is a Phosphoserine. The stretch at 63 to 67 (PPPPG) is one P-P-P-P-G repeat. The span at 65–84 (PPGFAPLAPRPGPELSPSPT) shows a compositional bias: pro residues. The segment at 65–95 (PPGFAPLAPRPGPELSPSPTSPTATPTTSSR) is disordered. 2 positions are modified to phosphoserine: Ser80 and Ser82. At Thr84 the chain carries Phosphothreonine. Ser85 carries the post-translational modification Phosphoserine. Low complexity predominate over residues 85-94 (SPTATPTTSS). Residues 87–160 (TATPTTSSRY…GSRCHFIHNP (74 aa)) form a necessary for nuclear localization region. The segment at 89–165 (TPTTSSRYKT…FIHNPTEDLA (77 aa)) is necessary for RNA-binding. 2 C3H1-type zinc fingers span residues 95-123 (RYKTELCRTYSESGRCRYGAKCQFAHGLG) and 133-161 (KYKTELCHKFYLQGRCPYGSRCHFIHNPT). Positions 95 to 186 (RYKTELCRTY…ISFSGLPSGR (92 aa)) are necessary for interaction with PABPN1. Residues 166–319 (LPGQPHVLRQ…PIFNRISVSE (154 aa)) form a necessary for mRNA decay activation region. Position 178 is a phosphoserine; by MAPKAPK2 (Ser178). Residues 179–188 (FSGLPSGRRS) are compositionally biased toward low complexity. The interval 179–309 (FSGLPSGRRS…PQTPAPPRRL (131 aa)) is disordered. Ser189 carries the phosphoserine modification. Residues 190 to 194 (PPPPG) form a P-P-P-P-G repeat. The span at 196–208 (SGPSLSSCSFSPS) shows a compositional bias: low complexity. Ser210 carries the post-translational modification Phosphoserine. The P-P-P-P-G repeat unit spans residues 211–215 (PPPPG). Ser220 carries the phosphoserine; by MAPK1; in vitro modification. A Phosphothreonine modification is found at Thr250. Phosphoserine is present on residues Ser269, Ser289, and Ser316. Low complexity predominate over residues 279-289 (SSGSSLGGSDS). The interval 305–319 (PPRRLPIFNRISVSE) is interaction with CNOT1.

Associates with cytoplasmic CCR4-NOT and PAN2-PAN3 deadenylase complexes to trigger ARE-containing mRNA deadenylation and decay processes. Part of a mRNA decay activation complex at least composed of poly(A)-specific exoribonucleases CNOT6, EXOSC2 and XRN1 and mRNA-decapping enzymes DCP1A and DCP2. Associates with the RNA exosome complex. Interacts (via phosphorylated form) with 14-3-3 proteins; these interactions promote exclusion of ZFP36 from cytoplasmic stress granules in response to arsenite treatment in a MAPKAPK2-dependent manner and does not prevent CCR4-NOT deadenylase complex recruitment or ZFP36-induced ARE-containing mRNA deadenylation and decay processes. Interacts with 14-3-3 proteins; these interactions occur in response to rapamycin in an Akt-dependent manner. Interacts with AGO2 and AGO4. Interacts (via C-terminus) with CNOT1; this interaction occurs in a RNA-independent manner and induces mRNA deadenylation. Interacts (via N-terminus) with CNOT6. Interacts with CNOT6L. Interacts (via C-terminus) with CNOT7; this interaction occurs in a RNA-independent manner, induces mRNA deadenylation and is inhibited in a phosphorylation MAPKAPK2-dependent manner. Interacts (via unphosphorylated form) with CNOT8; this interaction occurs in a RNA-independent manner and is inhibited in a phosphorylation MAPKAPK2-dependent manner. Interacts with DCP1A. Interacts (via N-terminus) with DCP2. Interacts with EDC3. Interacts (via N-terminus) with EXOSC2. Interacts with heat shock 70 kDa proteins. Interacts with KHSRP; this interaction increases upon cytokine-induced treatment. Interacts with MAP3K4; this interaction enhances the association with SH3KBP1/CIN85. Interacts with MAPKAPK2; this interaction occurs upon skeletal muscle satellite cell activation. Interacts with NCL. Interacts with NUP214; this interaction increases upon lipopolysaccharide (LPS) stimulation. Interacts with PABPC1; this interaction occurs in a RNA-dependent manner. Interacts (via hypophosphorylated form) with PABPN1 (via RRM domain and C-terminal arginine-rich region); this interaction occurs in the nucleus in a RNA-independent manner, decreases in presence of single-stranded poly(A) RNA-oligomer and in a p38 MAPK-dependent-manner and inhibits nuclear poly(A) tail synthesis. Interacts with PAN2. Interacts (via C3H1-type zinc finger domains) with PKM. Interacts (via C3H1-type zinc finger domains) with nuclear RNA poly(A) polymerase. Interacts with PPP2CA; this interaction occurs in LPS-stimulated cells and induces ZFP36 dephosphorylation, and hence may promote ARE-containing mRNAs decay. Interacts (via C-terminus) with PRR5L (via C-terminus); this interaction may accelerate ZFP36-mediated mRNA decay during stress. Interacts (via C-terminus) with SFN; this interaction occurs in a phosphorylation-dependent manner. Interacts (via extreme C-terminal region) with SH3KBP1/CIN85 (via SH3 domains); this interaction enhances MAP3K4-induced phosphorylation of ZFP36 at Ser-58 and Ser-85 and does not alter neither ZFP36 binding to ARE-containing transcripts nor TNF-alpha mRNA decay. Interacts with XRN1. Interacts (via C-terminus and Ser-178 phosphorylated form) with YWHAB; this interaction occurs in a p38/MAPKAPK2-dependent manner, increases cytoplasmic localization of ZFP36 and protects ZFP36 from Ser-178 dephosphorylation by serine/threonine phosphatase 2A, and hence may be crucial for stabilizing ARE-containing mRNAs. Interacts (via phosphorylated form) with YWHAE. Interacts (via C-terminus) with YWHAG; this interaction occurs in a phosphorylation-dependent manner. Interacts with YWHAH; this interaction occurs in a phosphorylation-dependent manner. Interacts with YWHAQ; this interaction occurs in a phosphorylation-dependent manner. Interacts with (via C-terminus) YWHAZ; this interaction occurs in a phosphorylation-dependent manner. Does not interact with SH3KBP1. Interacts (via the 4EHP-binding motif) with EIF4E2; the interaction is direct. Interacts (via P-P-P-P-G repeats) with GIGYF2; the interaction is direct. In terms of processing, phosphorylated. Phosphorylation at serine and/or threonine residues occurs in a p38 MAPK- and MAPKAPK2-dependent manner. Phosphorylated by MAPKAPK2 at Ser-52 and Ser-178; phosphorylation increases its stability and cytoplasmic localization, promotes binding to 14-3-3 adapter proteins and inhibits the recruitment of cytoplasmic CCR4-NOT and PAN2-PAN3 deadenylase complexes to the mRNA decay machinery, thereby inhibiting ZFP36-induced ARE-containing mRNA deadenylation and decay processes. Phosphorylation by MAPKAPK2 does not impair ARE-containing RNA-binding. Phosphorylated in a MAPKAPK2- and p38 MAPK-dependent manner upon skeletal muscle satellite cell activation; this phosphorylation inhibits ZFP36-mediated mRNA decay activity, and hence stabilizes MYOD1 mRNA. Phosphorylated by MAPK1 upon mitogen stimulation. Phosphorylated at Ser-58 and Ser-85; these phosphorylations increase in a SH3KBP1-dependent manner. Phosphorylated at serine and threonine residues in a pyruvate kinase PKM- and p38 MAPK-dependent manner. Phosphorylation at Ser-52 may participate in the PKM-mediated degradation of ZFP36 in a p38 MAPK-dependent manner. Dephosphorylated by serine/threonine phosphatase 2A at Ser-178. Post-translationally, ubiquitinated; pyruvate kinase (PKM)-dependent ubiquitination leads to proteasomal degradation through a p38 MAPK signaling pathway. Expressed in skeletal muscle satellite cells. Strongly expressed in differentiated adipocytes compared to preadipocytes (at protein level). Expressed in embryonic stem cells (ESCs). Expressed in heart, placenta, kidney, intestine, liver, lung, thymus, fat and spleen.

It is found in the nucleus. The protein resides in the cytoplasm. Its subcellular location is the cytoplasmic granule. The protein localises to the P-body. Functionally, zinc-finger RNA-binding protein that destabilizes numerous cytoplasmic AU-rich element (ARE)-containing mRNA transcripts by promoting their poly(A) tail removal or deadenylation, and hence provide a mechanism for attenuating protein synthesis. Acts as an 3'-untranslated region (UTR) ARE mRNA-binding adapter protein to communicate signaling events to the mRNA decay machinery. Recruits deadenylase CNOT7 (and probably the CCR4-NOT complex) via association with CNOT1, and hence promotes ARE-mediated mRNA deadenylation. Also functions by recruiting components of the cytoplasmic RNA decay machinery to the bound ARE-containing mRNAs. Self-regulates by destabilizing its own mRNA. Binds to 3'-UTR ARE of numerous mRNAs and of its own mRNA. Plays a role in anti-inflammatory responses; suppresses tumor necrosis factor (TNF)-alpha production by stimulating ARE-mediated TNF-alpha mRNA decay and several other inflammatory ARE-containing mRNAs in interferon (IFN)- and/or lipopolysaccharide (LPS)-induced macrophages. Also plays a role in the regulation of dendritic cell maturation at the post-transcriptional level, and hence operates as part of a negative feedback loop to limit the inflammatory response. Promotes ARE-mediated mRNA decay of hypoxia-inducible factor HIF1A mRNA during the response of endothelial cells to hypoxia. Positively regulates early adipogenesis of preadipocytes by promoting ARE-mediated mRNA decay of immediate early genes (IEGs). Negatively regulates hematopoietic/erythroid cell differentiation by promoting ARE-mediated mRNA decay of the transcription factor STAT5B mRNA. Plays a role in maintaining skeletal muscle satellite cell quiescence by promoting ARE-mediated mRNA decay of the myogenic determination factor MYOD1 mRNA. Also associates with and regulates the expression of non-ARE-containing target mRNAs at the post-transcriptional level, such as MHC class I mRNAs. Participates in association with argonaute RISC catalytic components in the ARE-mediated mRNA decay mechanism; assists microRNA (miRNA) targeting ARE-containing mRNAs. May also play a role in the regulation of cytoplasmic mRNA decapping; enhances decapping of ARE-containing RNAs, in vitro. Involved in the delivery of target ARE-mRNAs to processing bodies (PBs). In addition to its cytosolic mRNA-decay function, affects nuclear pre-mRNA processing. Negatively regulates nuclear poly(A)-binding protein PABPN1-stimulated polyadenylation activity on ARE-containing pre-mRNA during LPS-stimulated macrophages. Also involved in the regulation of stress granule (SG) and P-body (PB) formation and fusion. Plays a role in the regulation of keratinocyte proliferation, differentiation and apoptosis. Plays a role as a tumor suppressor by inhibiting cell proliferation in breast cancer cells. In Mus musculus (Mouse), this protein is mRNA decay activator protein ZFP36.